A 485-amino-acid chain; its full sequence is MWENKFQKEGLTFDDVLLVPAKSEVLPRDVSVKTKLTETLQLNIPIISAGMDTVTEAKMAIAIAREGGLGIIHKNMSVEEQAEQVDRVKRSESGVITNPFFLTPDRQVFDAEHLMGKYRISGVPIVDEDQKLVGILTNRDLRFIEDYSTLIDDVMTKENLVTAPVGTTLKEAEEILQKHKIEKLPLVDESGTLKGLITIKDIEKVIEFPNSAKDSQGRLIVGAAVGVSADTDVRVAALVEAGVDVIVIDTAHGHSKGVLEKVKAIREQYPDLTIIAGNVATAEATRDLIEAGANVVKVGIGPGSICTTRIVAGIGVPQITAVYDCANEARKHGVPIIADGGIKYSGDIVKALAAGGHAVMLGSLLAGVSESPGEREIFQGRQFKVYRGMGSLGAMEKGSKDRYFQENNQKLVPEGIEGRIPYKGPLHDTIHQLVGGIRAGMGYCGTKTIDELRENTQFIRITGAGLRESHPHDVQITKEAPNYTL.

2 consecutive CBS domains span residues 95 to 154 and 155 to 215; these read VITN…IDDV and MTKE…AKDS. NAD(+)-binding positions include aspartate 249 and 299-301; that span reads GIG. K(+) contacts are provided by glycine 301 and glycine 303. Serine 304 is an IMP binding site. Cysteine 306 serves as a coordination point for K(+). Catalysis depends on cysteine 306, which acts as the Thioimidate intermediate. Residues 339 to 341, 362 to 363, and 386 to 390 each bind IMP; these read DGG, GS, and YRGMG. The Proton acceptor role is filled by arginine 402. IMP is bound at residue glutamate 414. Positions 468, 469, and 470 each coordinate K(+).

This sequence belongs to the IMPDH/GMPR family. In terms of assembly, homotetramer. It depends on K(+) as a cofactor.

The catalysed reaction is IMP + NAD(+) + H2O = XMP + NADH + H(+). It participates in purine metabolism; XMP biosynthesis via de novo pathway; XMP from IMP: step 1/1. With respect to regulation, mycophenolic acid (MPA) is a non-competitive inhibitor that prevents formation of the closed enzyme conformation by binding to the same site as the amobile flap. In contrast, mizoribine monophosphate (MZP) is a competitive inhibitor that induces the closed conformation. MPA is a potent inhibitor of mammalian IMPDHs but a poor inhibitor of the bacterial enzymes. MZP is a more potent inhibitor of bacterial IMPDH. Catalyzes the conversion of inosine 5'-phosphate (IMP) to xanthosine 5'-phosphate (XMP), the first committed and rate-limiting step in the de novo synthesis of guanine nucleotides, and therefore plays an important role in the regulation of cell growth. The sequence is that of Inosine-5'-monophosphate dehydrogenase from Halalkalibacterium halodurans (strain ATCC BAA-125 / DSM 18197 / FERM 7344 / JCM 9153 / C-125) (Bacillus halodurans).